Here is a 429-residue protein sequence, read N- to C-terminus: S-adenosylmethionine synthase (429 aa).

Residue His14 participates in ATP binding. Asp16 is a Mg(2+) binding site. Position 42 (Glu42) interacts with K(+). Residues Glu55 and Gln98 each contribute to the L-methionine site. A flexible loop region spans residues 98-108; sequence QSADINRGVDR. ATP contacts are provided by residues 165–167, 252–253, Asp261, 267–268, Ala284, and Lys288; these read DAK, KF, and RK. Asp261 lines the L-methionine pocket. Lys292 provides a ligand contact to L-methionine.

This sequence belongs to the AdoMet synthase family. Homotetramer; dimer of dimers. Mg(2+) is required as a cofactor. The cofactor is K(+).

The protein localises to the cytoplasm. It carries out the reaction L-methionine + ATP + H2O = S-adenosyl-L-methionine + phosphate + diphosphate. It participates in amino-acid biosynthesis; S-adenosyl-L-methionine biosynthesis; S-adenosyl-L-methionine from L-methionine: step 1/1. Functionally, catalyzes the formation of S-adenosylmethionine (AdoMet) from methionine and ATP. The overall synthetic reaction is composed of two sequential steps, AdoMet formation and the subsequent tripolyphosphate hydrolysis which occurs prior to release of AdoMet from the enzyme. This chain is S-adenosylmethionine synthase, found in Porphyromonas gingivalis (strain ATCC BAA-308 / W83).